The following is a 336-amino-acid chain: Anthranilate phosphoribosyltransferase (336 aa).

Residues G79, 82–83 (GD), T87, 89–92 (NISS), 107–115 (KHGNRSVSS), and S119 each bind 5-phospho-alpha-D-ribose 1-diphosphate. G79 provides a ligand contact to anthranilate. S91 is a binding site for Mg(2+). Position 110 (N110) interacts with anthranilate. Residue R165 participates in anthranilate binding. Residues D223 and E224 each coordinate Mg(2+).

Belongs to the anthranilate phosphoribosyltransferase family. In terms of assembly, homodimer. The cofactor is Mg(2+).

It catalyses the reaction N-(5-phospho-beta-D-ribosyl)anthranilate + diphosphate = 5-phospho-alpha-D-ribose 1-diphosphate + anthranilate. Its pathway is amino-acid biosynthesis; L-tryptophan biosynthesis; L-tryptophan from chorismate: step 2/5. Its function is as follows. Catalyzes the transfer of the phosphoribosyl group of 5-phosphorylribose-1-pyrophosphate (PRPP) to anthranilate to yield N-(5'-phosphoribosyl)-anthranilate (PRA). The chain is Anthranilate phosphoribosyltransferase from Tolumonas auensis (strain DSM 9187 / NBRC 110442 / TA 4).